The following is a 346-amino-acid chain: N-acetyl-gamma-glutamyl-phosphate reductase (346 aa).

The active site involves cysteine 149.

This sequence belongs to the NAGSA dehydrogenase family. Type 1 subfamily.

Its subcellular location is the cytoplasm. The enzyme catalyses N-acetyl-L-glutamate 5-semialdehyde + phosphate + NADP(+) = N-acetyl-L-glutamyl 5-phosphate + NADPH + H(+). It participates in amino-acid biosynthesis; L-arginine biosynthesis; N(2)-acetyl-L-ornithine from L-glutamate: step 3/4. Catalyzes the NADPH-dependent reduction of N-acetyl-5-glutamyl phosphate to yield N-acetyl-L-glutamate 5-semialdehyde. In Geobacter metallireducens (strain ATCC 53774 / DSM 7210 / GS-15), this protein is N-acetyl-gamma-glutamyl-phosphate reductase.